The following is a 305-amino-acid chain: Ribonuclease BN (305 aa).

Residues His63, His65, Asp67, His68, His141, Asp212, and His270 each coordinate Zn(2+). Asp67 (proton acceptor) is an active-site residue.

This sequence belongs to the RNase Z family. RNase BN subfamily. As to quaternary structure, homodimer. The cofactor is Zn(2+).

Functionally, zinc phosphodiesterase, which has both exoribonuclease and endoribonuclease activities. The chain is Ribonuclease BN from Proteus mirabilis (strain HI4320).